A 150-amino-acid chain; its full sequence is uncharacterized protein (150 aa).

This sequence to A.tumefaciens conjugal transfer protein TraB.

This is an uncharacterized protein from Agrobacterium tumefaciens (strain 15955).